Here is a 540-residue protein sequence, read N- to C-terminus: Membrane protein insertase YidC (540 aa).

A helical transmembrane segment spans residues 6 to 26; it reads NILLIALALVSFLLFQQWQVA. Over residues 36-47 the composition is skewed to low complexity; that stretch reads QAQSSSSLPAPS. The tract at residues 36–63 is disordered; sequence QAQSSSSLPAPSFADELDPVPGQQQASA. 4 helical membrane passes run 342 to 362, 417 to 437, 455 to 475, and 496 to 516; these read AFIQSFVGNWGVAIICLTFIV, LGGCLPLVLQMPIFIALYWAL, LSAQDPYYILPLLMGASMFLI, and PVMFTFFFLFFPSGLVLYWLV.

The protein belongs to the OXA1/ALB3/YidC family. Type 1 subfamily. In terms of assembly, interacts with the Sec translocase complex via SecD. Specifically interacts with transmembrane segments of nascent integral membrane proteins during membrane integration.

Its subcellular location is the cell inner membrane. Its function is as follows. Required for the insertion and/or proper folding and/or complex formation of integral membrane proteins into the membrane. Involved in integration of membrane proteins that insert both dependently and independently of the Sec translocase complex, as well as at least some lipoproteins. Aids folding of multispanning membrane proteins. The protein is Membrane protein insertase YidC of Vibrio parahaemolyticus serotype O3:K6 (strain RIMD 2210633).